The primary structure comprises 292 residues: Ribosomal RNA small subunit methyltransferase A (292 aa).

S-adenosyl-L-methionine is bound by residues asparagine 28, leucine 30, glycine 55, glutamate 76, aspartate 101, and asparagine 126.

It belongs to the class I-like SAM-binding methyltransferase superfamily. rRNA adenine N(6)-methyltransferase family. RsmA subfamily.

It is found in the cytoplasm. It carries out the reaction adenosine(1518)/adenosine(1519) in 16S rRNA + 4 S-adenosyl-L-methionine = N(6)-dimethyladenosine(1518)/N(6)-dimethyladenosine(1519) in 16S rRNA + 4 S-adenosyl-L-homocysteine + 4 H(+). In terms of biological role, specifically dimethylates two adjacent adenosines (A1518 and A1519) in the loop of a conserved hairpin near the 3'-end of 16S rRNA in the 30S particle. May play a critical role in biogenesis of 30S subunits. The chain is Ribosomal RNA small subunit methyltransferase A from Bacillus anthracis.